The chain runs to 1274 residues: ABC multidrug transporter E (1274 aa).

N-linked (GlcNAc...) asparagine glycosylation occurs at asparagine 48. One can recognise an ABC transmembrane type-1 1 domain in the interval 120-344 (FCFRVTGLRV…IASPLIIVSK (225 aa)). 4 consecutive transmembrane segments (helical) span residues 183–203 (LALL…LTLV), 205–225 (SSAL…MTKI), 280–300 (IFGI…SLAF), and 321–341 (VFFS…PLII). Residues 377 to 629 (IIFRDVRFTY…EGGVYRDLVN (253 aa)) form the ABC transporter 1 domain. An ATP-binding site is contributed by 412–419 (GPSGSGKS). N-linked (GlcNAc...) asparagine glycosylation is found at asparagine 473 and asparagine 580. Transmembrane regions (helical) follow at residues 697–717 (VAVL…SWLF) and 737–757 (FWAL…STVG). Positions 697 to 984 (VAVLISTAGA…FFSFASNFAQ (288 aa)) constitute an ABC transmembrane type-1 2 domain. Asparagine 792 carries an N-linked (GlcNAc...) asparagine glycan. 3 helical membrane-spanning segments follow: residues 818–838 (FPLI…SFGW), 840–860 (LSLV…FMRI), and 924–944 (LIFA…FWYG). The region spanning 1023 to 1269 (VEFHDVSFRY…KGTYWQMVSS (247 aa)) is the ABC transporter 2 domain. Asparagine 1044 carries an N-linked (GlcNAc...) asparagine glycan. Position 1057–1064 (1057–1064 (GPSGCGKT)) interacts with ATP. A glycan (N-linked (GlcNAc...) asparagine) is linked at asparagine 1117.

This sequence belongs to the ABC transporter superfamily. ABCB family. Multidrug resistance exporter (TC 3.A.1.201) subfamily.

Its subcellular location is the cell membrane. In terms of biological role, pleiotropic ABC efflux transporter that may be involved in A.fumigatus adaptation to azoles such as vorizonazole. The sequence is that of ABC multidrug transporter E from Aspergillus fumigatus (strain ATCC MYA-4609 / CBS 101355 / FGSC A1100 / Af293) (Neosartorya fumigata).